An 80-amino-acid polypeptide reads, in one-letter code: Beta-toxin KAaH2 (80 aa).

The signal sequence occupies residues 1 to 22 (MMKLMLFSIIVILFSLIGSIHG). Residues 25-80 (VPGNYPLDSSDDTYLCAPLGENPSCIQICRKHGVKYGYCYAFQCWCEYLEDKNVKI) form the LCN-type CS-alpha/beta domain. Disulfide bonds link Cys40/Cys63, Cys49/Cys68, and Cys53/Cys70.

The protein belongs to the long (3 C-C) scorpion toxin superfamily. Sodium/Potassium channel inhibitor family. Expressed by the venom gland.

Its subcellular location is the secreted. Its function is as follows. Weakly inhibits the vertebrate potassium channel Kv1.1/KCNA1. The polypeptide is Beta-toxin KAaH2 (Androctonus australis (Sahara scorpion)).